The following is a 248-amino-acid chain: Protein GrpE (248 aa).

The disordered stretch occupies residues 229–248 (AAPKEDTLPAQENQSSPADS). The segment covering 238–248 (AQENQSSPADS) has biased composition (polar residues).

It belongs to the GrpE family. In terms of assembly, homodimer.

The protein localises to the cytoplasm. Functionally, participates actively in the response to hyperosmotic and heat shock by preventing the aggregation of stress-denatured proteins, in association with DnaK and GrpE. It is the nucleotide exchange factor for DnaK and may function as a thermosensor. Unfolded proteins bind initially to DnaJ; upon interaction with the DnaJ-bound protein, DnaK hydrolyzes its bound ATP, resulting in the formation of a stable complex. GrpE releases ADP from DnaK; ATP binding to DnaK triggers the release of the substrate protein, thus completing the reaction cycle. Several rounds of ATP-dependent interactions between DnaJ, DnaK and GrpE are required for fully efficient folding. The sequence is that of Protein GrpE from Trichormus variabilis (strain ATCC 29413 / PCC 7937) (Anabaena variabilis).